The sequence spans 94 residues: Pyrimidine/purine nucleoside phosphorylase (94 aa).

Belongs to the nucleoside phosphorylase PpnP family.

The enzyme catalyses a purine D-ribonucleoside + phosphate = a purine nucleobase + alpha-D-ribose 1-phosphate. It carries out the reaction adenosine + phosphate = alpha-D-ribose 1-phosphate + adenine. The catalysed reaction is cytidine + phosphate = cytosine + alpha-D-ribose 1-phosphate. It catalyses the reaction guanosine + phosphate = alpha-D-ribose 1-phosphate + guanine. The enzyme catalyses inosine + phosphate = alpha-D-ribose 1-phosphate + hypoxanthine. It carries out the reaction thymidine + phosphate = 2-deoxy-alpha-D-ribose 1-phosphate + thymine. The catalysed reaction is uridine + phosphate = alpha-D-ribose 1-phosphate + uracil. It catalyses the reaction xanthosine + phosphate = alpha-D-ribose 1-phosphate + xanthine. Catalyzes the phosphorolysis of diverse nucleosides, yielding D-ribose 1-phosphate and the respective free bases. Can use uridine, adenosine, guanosine, cytidine, thymidine, inosine and xanthosine as substrates. Also catalyzes the reverse reactions. The chain is Pyrimidine/purine nucleoside phosphorylase from Pseudomonas entomophila (strain L48).